A 314-amino-acid polypeptide reads, in one-letter code: tRNA-cytidine(32) 2-sulfurtransferase (314 aa).

The short motif at 49-54 (SGGKDS) is the PP-loop motif element. Cysteine 124, cysteine 127, and cysteine 215 together coordinate [4Fe-4S] cluster.

It belongs to the TtcA family. As to quaternary structure, homodimer. Mg(2+) is required as a cofactor. Requires [4Fe-4S] cluster as cofactor.

Its subcellular location is the cytoplasm. It carries out the reaction cytidine(32) in tRNA + S-sulfanyl-L-cysteinyl-[cysteine desulfurase] + AH2 + ATP = 2-thiocytidine(32) in tRNA + L-cysteinyl-[cysteine desulfurase] + A + AMP + diphosphate + H(+). It functions in the pathway tRNA modification. Functionally, catalyzes the ATP-dependent 2-thiolation of cytidine in position 32 of tRNA, to form 2-thiocytidine (s(2)C32). The sulfur atoms are provided by the cysteine/cysteine desulfurase (IscS) system. This Histophilus somni (strain 129Pt) (Haemophilus somnus) protein is tRNA-cytidine(32) 2-sulfurtransferase.